Consider the following 881-residue polypeptide: DNA mismatch repair protein MutS (881 aa).

Position 612-619 (612-619 (GPNMAGKS)) interacts with ATP.

Belongs to the DNA mismatch repair MutS family.

This protein is involved in the repair of mismatches in DNA. It is possible that it carries out the mismatch recognition step. This protein has a weak ATPase activity. The chain is DNA mismatch repair protein MutS from Clostridium tetani (strain Massachusetts / E88).